We begin with the raw amino-acid sequence, 427 residues long: Male abnormal protein mab-31 (427 aa).

The tract at residues 68–102 is disordered; sequence PIGTGRFPNPSPPRSSSGTNTPIRKTPGSRPDRGK.

The protein localises to the nucleus. In terms of biological role, putative transcription factor. Acts in a TGF-beta-like pathway during development of male-specific genital sensilla (simple sense organs), known as rays. Involved in production of reactive oxygen species (ROS), acting downstream of the TGF-beta-like dbl-1 signaling pathway. Involved in locomotory behavior. The polypeptide is Male abnormal protein mab-31 (Caenorhabditis elegans).